The following is a 269-amino-acid chain: ATP synthase subunit delta (269 aa).

Belongs to the ATPase delta chain family. In terms of assembly, F-type ATPases have 2 components, F(1) - the catalytic core - and F(0) - the membrane proton channel. F(1) has five subunits: alpha(3), beta(3), gamma(1), delta(1), epsilon(1). F(0) has three main subunits: a(1), b(2) and c(10-14). The alpha and beta chains form an alternating ring which encloses part of the gamma chain. F(1) is attached to F(0) by a central stalk formed by the gamma and epsilon chains, while a peripheral stalk is formed by the delta and b chains.

The protein resides in the cell membrane. Functionally, f(1)F(0) ATP synthase produces ATP from ADP in the presence of a proton or sodium gradient. F-type ATPases consist of two structural domains, F(1) containing the extramembraneous catalytic core and F(0) containing the membrane proton channel, linked together by a central stalk and a peripheral stalk. During catalysis, ATP synthesis in the catalytic domain of F(1) is coupled via a rotary mechanism of the central stalk subunits to proton translocation. In terms of biological role, this protein is part of the stalk that links CF(0) to CF(1). It either transmits conformational changes from CF(0) to CF(1) or is implicated in proton conduction. The polypeptide is ATP synthase subunit delta (Thermobifida fusca (strain YX)).